The following is a 359-amino-acid chain: Type-1 angiotensin II receptor B (359 aa).

Residues 1-25 (MTLNSSTEDGIKRIQDDCPKAGRHN) lie on the Extracellular side of the membrane. Asparagine 4 carries N-linked (GlcNAc...) asparagine glycosylation. Positions 15 and 17 each coordinate angiotensin II. 2 disulfide bridges follow: cysteine 18–cysteine 274 and cysteine 101–cysteine 180. Residues 26–55 (YIFVMIPTLYSIIFVVGIFGNSLVVIVIYF) traverse the membrane as a helical segment. The Cytoplasmic portion of the chain corresponds to 56–61 (YMKLKT). A helical membrane pass occupies residues 62–89 (VASVFLLNLALADLCFLLTLPLWAVYTA). At 90–98 (MEYRWPFGN) the chain is on the extracellular side. Residues 99–125 (HLCKIASASVSFNLYASVFLLTCLSID) form a helical membrane-spanning segment. The Cytoplasmic portion of the chain corresponds to 126–141 (RYLAIVHPMKSRLRRT). The helical transmembrane segment at 142–165 (MLVAKVTCIIIWLMAGLASLPAVI) threads the bilayer. At 166–190 (YRNVYFIENTNITVCAFHYESQNST) the chain is on the extracellular side. Residue arginine 167 coordinates angiotensin II. The N-linked (GlcNAc...) asparagine glycan is linked to asparagine 176. Angiotensin II-binding residues include phenylalanine 182, histidine 183, and tyrosine 184. An N-linked (GlcNAc...) asparagine glycan is attached at asparagine 188. A helical membrane pass occupies residues 191 to 216 (LPIGLGLTKNILGFVFPFLIILTSYT). Lysine 199 is an angiotensin II binding site. The Cytoplasmic segment spans residues 217-239 (LIWKALKKAYKIQKNTPRNDDIF). The helical transmembrane segment at 240–268 (RIIMAIVLFFFFSWVPHQIFTFLDVLIQL) threads the bilayer. Topologically, residues 269 to 278 (GIIRDCEIAD) are extracellular. Residues 279 to 304 (IVDTAMPITICIAYFNNCLNPLFYGF) form a helical membrane-spanning segment. Topologically, residues 305-359 (LGKKFKKYFLQLLKYIPPTAKSHAGLSTKMSTLSYRPSDNMSSSAKKSASFFEVE) are cytoplasmic. A disordered region spans residues 339-359 (YRPSDNMSSSAKKSASFFEVE). Low complexity predominate over residues 346–359 (SSSAKKSASFFEVE).

Belongs to the G-protein coupled receptor 1 family. As to quaternary structure, interacts with MAS1. Interacts with ARRB1. Interacts with FLNA (via filamin repeat 21); increases PKA-mediated phosphorylation of FLNA. C-terminal Ser or Thr residues may be phosphorylated. In terms of tissue distribution, is expressed in the liver, kidney, aorta, lung, uterus, ovary, spleen, heart, and vascular smooth muscle cell. Expressed most abundantly in the adrenal gland.

It is found in the cell membrane. Functionally, receptor for angiotensin II, a vasoconstricting peptide, which acts as a key regulator of blood pressure and sodium retention by the kidney. The activated receptor in turn couples to G-alpha proteins G(q) (GNAQ, GNA11, GNA14 or GNA15) and thus activates phospholipase C and increases the cytosolic Ca(2+) concentrations, which in turn triggers cellular responses such as stimulation of protein kinase C. The chain is Type-1 angiotensin II receptor B (Agtr1b) from Rattus norvegicus (Rat).